The primary structure comprises 407 residues: Arginine deiminase (407 aa).

Catalysis depends on cysteine 397, which acts as the Amidino-cysteine intermediate.

This sequence belongs to the arginine deiminase family.

It localises to the cytoplasm. The enzyme catalyses L-arginine + H2O = L-citrulline + NH4(+). The protein operates within amino-acid degradation; L-arginine degradation via ADI pathway; carbamoyl phosphate from L-arginine: step 1/2. The chain is Arginine deiminase from Vibrio parahaemolyticus serotype O3:K6 (strain RIMD 2210633).